Consider the following 630-residue polypeptide: 1-deoxy-D-xylulose-5-phosphate synthase (630 aa).

Thiamine diphosphate-binding positions include His-72 and 113–115; that span reads GHS. Asp-144 provides a ligand contact to Mg(2+). Thiamine diphosphate-binding positions include 145–146, Asn-173, Tyr-284, and Glu-367; that span reads GA. Asn-173 contributes to the Mg(2+) binding site.

The protein belongs to the transketolase family. DXPS subfamily. Homodimer. Requires Mg(2+) as cofactor. Thiamine diphosphate serves as cofactor.

The catalysed reaction is D-glyceraldehyde 3-phosphate + pyruvate + H(+) = 1-deoxy-D-xylulose 5-phosphate + CO2. It functions in the pathway metabolic intermediate biosynthesis; 1-deoxy-D-xylulose 5-phosphate biosynthesis; 1-deoxy-D-xylulose 5-phosphate from D-glyceraldehyde 3-phosphate and pyruvate: step 1/1. Functionally, catalyzes the acyloin condensation reaction between C atoms 2 and 3 of pyruvate and glyceraldehyde 3-phosphate to yield 1-deoxy-D-xylulose-5-phosphate (DXP). This Geobacillus thermodenitrificans (strain NG80-2) protein is 1-deoxy-D-xylulose-5-phosphate synthase.